The following is a 500-amino-acid chain: Putative DNA recombinase (500 aa).

Residues 1–144 (MIAIYVRVST…SGRLQKMKKG (144 aa)) form the Resolvase/invertase-type recombinase catalytic domain. The active-site O-(5'-phospho-DNA)-serine intermediate is the serine 9. Positions 152–288 (LYGYKFVKEK…QELLGQSKRK (137 aa)) form a DNA-binding region, recombinase. A coiled-coil region spans residues 372 to 448 (KEAEQSNHLS…IQSKMKVLDD (77 aa)).

The protein in the N-terminal section; belongs to the site-specific recombinase resolvase family.

Putative site-specific recombinase having a very important role in sporulation. It probably plays a role in the recombination of SpoIIIC and SpoIVCB to form sigma K factor. The protein is Putative DNA recombinase (cisA) of Bacillus subtilis (strain 168).